The chain runs to 132 residues: uncharacterized protein (132 aa).

4 consecutive transmembrane segments (helical) span residues tryptophan 6 to serine 26, asparagine 34 to phenylalanine 54, threonine 59 to tyrosine 79, and isoleucine 106 to isoleucine 126.

The protein localises to the cell membrane. This is an uncharacterized protein from Bacillus subtilis (strain 168).